The chain runs to 70 residues: Large ribosomal subunit protein bL32c (70 aa).

Disordered stretches follow at residues M1–R20 and N51–P70. Polar residues predominate over residues D52 to K61.

The protein belongs to the bacterial ribosomal protein bL32 family.

It is found in the plastid. The protein localises to the chloroplast. This chain is Large ribosomal subunit protein bL32c (rpl32), found in Pinus thunbergii (Japanese black pine).